The following is a 231-amino-acid chain: E3 ubiquitin-protein ligase At3g02290 (231 aa).

A compositionally biased stretch (basic and acidic residues) spans 103-118 (GSSHSHEEVEPLRSDS). The tract at residues 103 to 125 (GSSHSHEEVEPLRSDSDADSESF) is disordered. The segment at 181–222 (CPTCLEEYTSENPKIVTKCSHHFHLSCIYEWMERSENCPVCG) adopts an RING-type; atypical zinc-finger fold.

It is found in the cytoplasm. It catalyses the reaction S-ubiquitinyl-[E2 ubiquitin-conjugating enzyme]-L-cysteine + [acceptor protein]-L-lysine = [E2 ubiquitin-conjugating enzyme]-L-cysteine + N(6)-ubiquitinyl-[acceptor protein]-L-lysine.. Its pathway is protein modification; protein ubiquitination. Mediates E2-dependent protein ubiquitination. The protein is E3 ubiquitin-protein ligase At3g02290 of Arabidopsis thaliana (Mouse-ear cress).